Consider the following 103-residue polypeptide: Large ribosomal subunit protein bL21 (103 aa).

Belongs to the bacterial ribosomal protein bL21 family. Part of the 50S ribosomal subunit. Contacts protein L20.

Functionally, this protein binds to 23S rRNA in the presence of protein L20. This Ralstonia nicotianae (strain ATCC BAA-1114 / GMI1000) (Ralstonia solanacearum) protein is Large ribosomal subunit protein bL21.